The sequence spans 248 residues: Protein PARTING DANCERS homolog (248 aa).

The segment covering 1–10 has biased composition (polar residues); that stretch reads MERSTHSTGW. The tract at residues 1-25 is disordered; the sequence is MERSTHSTGWTCLPPPPPEPAAPGR.

It belongs to the ERCC1/RAD10/SWI10 family. In terms of assembly, interacts with SHOC1 (via C-terminus). Interacts with HEI10. In terms of tissue distribution, highly expressed in anthers and pistil during meiosis. Expressed in pollen mother cells (PMCs) during meiosis. Expressed at low levels in roots, shoots, leaves, flowers, and glumes.

It is found in the chromosome. The protein localises to the nucleus. The protein resides in the cytoplasm. It localises to the cell membrane. Functionally, essential for normal crossover (CO) formation during meiosis. Essential component for the formation of class I meiotic COs. Interacts with SHOC1, another meiotic component, to regulate CO formation, possibly by stabilizing the recombination intermediates during meiosis. PTD and SHOC1 may form transient heterotrimeric or heterotetrameric complexes with HEI10 and/or ZIP4 to promote class I COs formation. Does not seem to be involved in early meiotic recombination steps involving double-strand break (DSB) formation, processing, and single-strand invasion. Does not seem to be involved in homologous pairing or synaptonemal complex (SC) assembly. This chain is Protein PARTING DANCERS homolog, found in Oryza sativa subsp. japonica (Rice).